The sequence spans 141 residues: ATP synthase epsilon chain (141 aa).

It belongs to the ATPase epsilon chain family. F-type ATPases have 2 components, CF(1) - the catalytic core - and CF(0) - the membrane proton channel. CF(1) has five subunits: alpha(3), beta(3), gamma(1), delta(1), epsilon(1). CF(0) has three main subunits: a, b and c.

Its subcellular location is the cell inner membrane. Functionally, produces ATP from ADP in the presence of a proton gradient across the membrane. This chain is ATP synthase epsilon chain, found in Pseudomonas aeruginosa (strain LESB58).